The sequence spans 336 residues: Probable RNA methyltransferase Anae109_4379 (336 aa).

The active-site Proton acceptor is glutamate 86. Residues 93–322 (FDTHHTVCLS…PIVRRYSGGQ (230 aa)) form the Radical SAM core domain. A disulfide bond links cysteine 100 and cysteine 328. Positions 107, 111, and 114 each coordinate [4Fe-4S] cluster. S-adenosyl-L-methionine-binding positions include 154 to 155 (GE), serine 186, and 209 to 211 (SLN). Residue cysteine 328 is the S-methylcysteine intermediate of the active site.

Belongs to the radical SAM superfamily. RlmN family. It depends on [4Fe-4S] cluster as a cofactor.

It localises to the cytoplasm. This chain is Probable RNA methyltransferase Anae109_4379, found in Anaeromyxobacter sp. (strain Fw109-5).